A 133-amino-acid polypeptide reads, in one-letter code: uncharacterized protein (133 aa).

The tract at residues 82-133 is disordered; it reads KIKSYSPSRSQKALNNPSKIRTKQTNNDTTIQQSNNTTSTNTKPSSNTNTQQ. A compositionally biased stretch (polar residues) spans 86–100; it reads YSPSRSQKALNNPSK. The segment covering 105–133 has biased composition (low complexity); that stretch reads QTNNDTTIQQSNNTTSTNTKPSSNTNTQQ.

This is an uncharacterized protein from Acidianus convivator (ABV).